The chain runs to 299 residues: DNA-binding transcriptional repressor CapW (299 aa).

Positions 1–22 (MTDESKPTDDQPTSKGRQGARW) are disordered. The interval 1 to 95 (MTDESKPTDD…SFKAVFPSSA (95 aa)) is winged HTH domain. The WYL domain stretch occupies residues 96–207 (VERYLDDLLR…LTRIKCCKYV (112 aa)). The WYL domain maps to 131–211 (GRRLNADIVG…KCCKYVGQDR (81 aa)). Residues 156–200 (YQSLTDPEGGERMLSPHALVHDGNRWHVRAYCHKRKAFRDFSLTR) are probable ligand-binding region. Residues 208 to 299 (GQDRDRADED…RDEIKDLIQY (92 aa)) form a WCX domain region.

In terms of assembly, homodimer.

Transcriptional regulator of a CBASS antivirus system. CBASS (cyclic oligonucleotide-based antiphage signaling system) provides immunity against bacteriophage. The CD-NTase protein synthesizes cyclic nucleotides in response to infection; these serve as specific second messenger signals. The signals activate a diverse range of effectors, leading to bacterial cell death and thus abortive phage infection. A type III CBASS system, part of a Cap17-CapW-CdnC-Cap7-Cap6-Cap18 locus. Binds specifically to palindromes that overlap the -10 site in the promoter of cdnC, found between the genes for divergently transcribed capW and cdnC (cognate DNA). Probably represses transcription bidirectionally from the promoter. The chain is DNA-binding transcriptional repressor CapW from Pseudomonas aeruginosa.